Here is a 315-residue protein sequence, read N- to C-terminus: DNA-directed RNA polymerase subunit alpha (315 aa).

The tract at residues 1–228 (MIEMEKPKVE…EHLNLFITLK (228 aa)) is alpha N-terminal domain (alpha-NTD). The segment at 245–315 (KEKVLEMTIE…LGLGLRPSDE (71 aa)) is alpha C-terminal domain (alpha-CTD).

It belongs to the RNA polymerase alpha chain family. Homodimer. The RNAP catalytic core consists of 2 alpha, 1 beta, 1 beta' and 1 omega subunit. When a sigma factor is associated with the core the holoenzyme is formed, which can initiate transcription.

It catalyses the reaction RNA(n) + a ribonucleoside 5'-triphosphate = RNA(n+1) + diphosphate. In terms of biological role, DNA-dependent RNA polymerase catalyzes the transcription of DNA into RNA using the four ribonucleoside triphosphates as substrates. The protein is DNA-directed RNA polymerase subunit alpha of Alkaliphilus metalliredigens (strain QYMF).